Consider the following 481-residue polypeptide: Glutamyl-tRNA(Gln) amidotransferase subunit A (481 aa).

Catalysis depends on charge relay system residues Lys74 and Ser149. Catalysis depends on Ser173, which acts as the Acyl-ester intermediate.

This sequence belongs to the amidase family. GatA subfamily. In terms of assembly, heterotrimer of A, B and C subunits.

It catalyses the reaction L-glutamyl-tRNA(Gln) + L-glutamine + ATP + H2O = L-glutaminyl-tRNA(Gln) + L-glutamate + ADP + phosphate + H(+). Functionally, allows the formation of correctly charged Gln-tRNA(Gln) through the transamidation of misacylated Glu-tRNA(Gln) in organisms which lack glutaminyl-tRNA synthetase. The reaction takes place in the presence of glutamine and ATP through an activated gamma-phospho-Glu-tRNA(Gln). The polypeptide is Glutamyl-tRNA(Gln) amidotransferase subunit A (Francisella tularensis subsp. novicida (strain U112)).